A 91-amino-acid chain; its full sequence is Sec-independent protein translocase protein TatA (91 aa).

Residues 1-21 traverse the membrane as a helical segment; that stretch reads MGIFDWKHWIVILIVVVLVFG. The segment at 42–91 is disordered; that stretch reads AMNDDDKPAEQPAPQPQQAQAAPQGSPLNQPHTIDAQAHKVDEPIRKDQV. Residues 51 to 65 are compositionally biased toward low complexity; that stretch reads EQPAPQPQQAQAAPQ. A compositionally biased stretch (basic and acidic residues) spans 78–91; that stretch reads QAHKVDEPIRKDQV.

It belongs to the TatA/E family. In terms of assembly, the Tat system comprises two distinct complexes: a TatABC complex, containing multiple copies of TatA, TatB and TatC subunits, and a separate TatA complex, containing only TatA subunits. Substrates initially bind to the TatABC complex, which probably triggers association of the separate TatA complex to form the active translocon.

It localises to the cell inner membrane. Functionally, part of the twin-arginine translocation (Tat) system that transports large folded proteins containing a characteristic twin-arginine motif in their signal peptide across membranes. TatA could form the protein-conducting channel of the Tat system. This chain is Sec-independent protein translocase protein TatA, found in Pseudomonas savastanoi pv. phaseolicola (strain 1448A / Race 6) (Pseudomonas syringae pv. phaseolicola (strain 1448A / Race 6)).